The primary structure comprises 328 residues: Tetraacyldisaccharide 4'-kinase (328 aa).

55-62 provides a ligand contact to ATP; that stretch reads TAGGNGKT.

It belongs to the LpxK family.

It catalyses the reaction a lipid A disaccharide + ATP = a lipid IVA + ADP + H(+). It functions in the pathway glycolipid biosynthesis; lipid IV(A) biosynthesis; lipid IV(A) from (3R)-3-hydroxytetradecanoyl-[acyl-carrier-protein] and UDP-N-acetyl-alpha-D-glucosamine: step 6/6. Transfers the gamma-phosphate of ATP to the 4'-position of a tetraacyldisaccharide 1-phosphate intermediate (termed DS-1-P) to form tetraacyldisaccharide 1,4'-bis-phosphate (lipid IVA). This Escherichia coli O127:H6 (strain E2348/69 / EPEC) protein is Tetraacyldisaccharide 4'-kinase.